We begin with the raw amino-acid sequence, 890 residues long: MPDTARPSATTEPTPFMAQYLSIKAEHPGALLFFRMGDFYELFFQDAVEAASILDITLTSRGEHDGKPIPMAGVPYHAAEGYLARLIKGGCRVAVCEQMETPAEAKKRGSKSIVQRGVVRIVTPGTLTEDALLPARQGQALAAIAFSGAGEAALAVCDVSTGAFDLTAIPAARLGEALLAWPLSELVISADDADRPLILEARGFLSAPITERPGRAATAKSGEALLKEVFGLAALDSLGDFSRVEFAAAGLLLDYVKLTQAGAPIRLRAPRRPDTGGILLIDPATRASLEIDRSISGGRDGTLLAVIDRTVTAPGARLLAARLARPSRSVSEITSRYDAVSHLLGDAGQLEDVRVRLKSAPDLERAVMRLNLGRGGPRDMAALSKAVLSGAEAAGVLGRGLPPRLAEVAETLGLSGAPSVRAFAEDLARALTEAPPMLARDGGFIAQGWDVALDEVRALRDGSRRVIAELQAKYADQTGINALKVKFNNVLGYFIEVPAAKADPMLRAPLSADFIHRQTMAGAVRFSTHELADLAGRIGRAEDEAKAREIAIFEAFCAKVEELTGPLAVIAAALAELDVAASHAVWAAETGAVRPALDPRPVFEAKGLRHPVVEAALRKEGKGFTANDLHLDAEGNEGARFLLVTGPNMAGKSTYLRQSALAVILAQAGAFVPAASLRLGLSDRVFSRVGASDDLARGRSTFMVEMVETAAILNQATPESFVILDEVGRGTATWDGLAIAWAAAEHLHDTNRCRAIFATHYHELTDLAARMPAASNASLKAREWKQDLIFLHEVQPGPADRSYGVQVAKLAGLPRAAVARAGQILKKLEAGPSASENLPLFAMVAEDPAPEFSPESSAVIEALAAADPDSLTPREALDLVYRLKDLSRGA.

An ATP-binding site is contributed by 646–653 (GPNMAGKS).

This sequence belongs to the DNA mismatch repair MutS family.

This protein is involved in the repair of mismatches in DNA. It is possible that it carries out the mismatch recognition step. This protein has a weak ATPase activity. The protein is DNA mismatch repair protein MutS of Hyphomonas neptunium (strain ATCC 15444).